The sequence spans 237 residues: 2',3'-cyclic-nucleotide 3'-phosphodiesterase (237 aa).

Residue histidine 21 is the Proton donor/acceptor of the active site. Threonine 23 lines the substrate pocket. Positions 117 to 137 (HLYTTDSHGNTVKKKSKQSQD) are disordered. Residue histidine 167 is the Proton donor/acceptor of the active site. Residues serine 169 and tyrosine 172 each coordinate substrate.

Belongs to the 2H phosphoesterase superfamily. CPD1 family.

The protein localises to the golgi apparatus. The catalysed reaction is a nucleoside 2',3'-cyclic phosphate + H2O = a nucleoside 2'-phosphate + H(+). Functionally, involved in the metabolism of ADP-ribose 1',2'-cyclic phosphate which is produced as a consequence of tRNA splicing. The polypeptide is 2',3'-cyclic-nucleotide 3'-phosphodiesterase (CPD1) (Debaryomyces hansenii (strain ATCC 36239 / CBS 767 / BCRC 21394 / JCM 1990 / NBRC 0083 / IGC 2968) (Yeast)).